Reading from the N-terminus, the 210-residue chain is Imidazole glycerol phosphate synthase subunit HisH (210 aa).

Residues 3–210 form the Glutamine amidotransferase type-1 domain; that stretch reads TIAIIDYGMG…ILKNFALSKA (208 aa). Cysteine 81 functions as the Nucleophile in the catalytic mechanism. Active-site residues include histidine 190 and glutamate 192.

In terms of assembly, heterodimer of HisH and HisF.

It is found in the cytoplasm. The catalysed reaction is 5-[(5-phospho-1-deoxy-D-ribulos-1-ylimino)methylamino]-1-(5-phospho-beta-D-ribosyl)imidazole-4-carboxamide + L-glutamine = D-erythro-1-(imidazol-4-yl)glycerol 3-phosphate + 5-amino-1-(5-phospho-beta-D-ribosyl)imidazole-4-carboxamide + L-glutamate + H(+). It carries out the reaction L-glutamine + H2O = L-glutamate + NH4(+). It participates in amino-acid biosynthesis; L-histidine biosynthesis; L-histidine from 5-phospho-alpha-D-ribose 1-diphosphate: step 5/9. Functionally, IGPS catalyzes the conversion of PRFAR and glutamine to IGP, AICAR and glutamate. The HisH subunit catalyzes the hydrolysis of glutamine to glutamate and ammonia as part of the synthesis of IGP and AICAR. The resulting ammonia molecule is channeled to the active site of HisF. The protein is Imidazole glycerol phosphate synthase subunit HisH of Geobacter metallireducens (strain ATCC 53774 / DSM 7210 / GS-15).